Consider the following 718-residue polypeptide: Methionine--tRNA ligase (718 aa).

The short motif at 27–37 is the 'HIGH' region element; it reads PYANGQIHIGH. Residues C158, C161, C171, and C174 each contribute to the Zn(2+) site. The 'KMSKS' region signature appears at 348–352; it reads KMSKS. Residue K351 coordinates ATP. The region spanning 612–718 is the tRNA-binding domain; the sequence is DFAKIDLRIA…SGAKPGMRVK (107 aa).

This sequence belongs to the class-I aminoacyl-tRNA synthetase family. MetG type 1 subfamily. As to quaternary structure, homodimer. Zn(2+) serves as cofactor.

It is found in the cytoplasm. The enzyme catalyses tRNA(Met) + L-methionine + ATP = L-methionyl-tRNA(Met) + AMP + diphosphate. Its function is as follows. Is required not only for elongation of protein synthesis but also for the initiation of all mRNA translation through initiator tRNA(fMet) aminoacylation. In Burkholderia orbicola (strain AU 1054), this protein is Methionine--tRNA ligase.